Reading from the N-terminus, the 203-residue chain is ATP-dependent Clp protease proteolytic subunit (203 aa).

S107 serves as the catalytic Nucleophile. The active site involves H132.

Belongs to the peptidase S14 family. In terms of assembly, fourteen ClpP subunits assemble into 2 heptameric rings which stack back to back to give a disk-like structure with a central cavity, resembling the structure of eukaryotic proteasomes.

The protein localises to the cytoplasm. It carries out the reaction Hydrolysis of proteins to small peptides in the presence of ATP and magnesium. alpha-casein is the usual test substrate. In the absence of ATP, only oligopeptides shorter than five residues are hydrolyzed (such as succinyl-Leu-Tyr-|-NHMec, and Leu-Tyr-Leu-|-Tyr-Trp, in which cleavage of the -Tyr-|-Leu- and -Tyr-|-Trp bonds also occurs).. Cleaves peptides in various proteins in a process that requires ATP hydrolysis. Has a chymotrypsin-like activity. Plays a major role in the degradation of misfolded proteins. The chain is ATP-dependent Clp protease proteolytic subunit from Thermotoga maritima (strain ATCC 43589 / DSM 3109 / JCM 10099 / NBRC 100826 / MSB8).